Here is a 210-residue protein sequence, read N- to C-terminus: MSAALLSLVQWLSPAFPTGAFAYSHGLEWAISEGEVRDAASARRWIADVLAFGAGRTDAILLAHALRGHDPEALADLARALAPSAERLRETEEQGAAFAATVAALTGRDLPPRPLPVALGQAAAPLGLPVAEVLALMLHAFAANLVSAAVRFVPLGQTEGQAALAALHPLIEEIAAESAEAPLDAIGSAALRGDLAAMRHETQEVRIFKT.

Belongs to the UreF family. As to quaternary structure, ureD, UreF and UreG form a complex that acts as a GTP-hydrolysis-dependent molecular chaperone, activating the urease apoprotein by helping to assemble the nickel containing metallocenter of UreC. The UreE protein probably delivers the nickel.

Its subcellular location is the cytoplasm. Required for maturation of urease via the functional incorporation of the urease nickel metallocenter. The polypeptide is Urease accessory protein UreF (Cereibacter sphaeroides (strain KD131 / KCTC 12085) (Rhodobacter sphaeroides)).